Here is a 433-residue protein sequence, read N- to C-terminus: D-amino acid dehydrogenase (433 aa).

3-17 serves as a coordination point for FAD; it reads VLVLGSGVIGTASAY.

The protein belongs to the DadA oxidoreductase family. FAD serves as cofactor.

The enzyme catalyses a D-alpha-amino acid + A + H2O = a 2-oxocarboxylate + AH2 + NH4(+). The protein operates within amino-acid degradation; D-alanine degradation; NH(3) and pyruvate from D-alanine: step 1/1. In terms of biological role, oxidative deamination of D-amino acids. This is D-amino acid dehydrogenase from Pseudomonas putida (strain W619).